Consider the following 696-residue polypeptide: Tensin-4 (696 aa).

An N-terminal signal peptide occupies residues 1 to 14 (MSSSLLAGGHMVSL). 3 disordered regions span residues 157 to 246 (LDGP…RAPQ), 271 to 344 (SLPH…CPAS), and 356 to 416 (LING…KDMQ). Over residues 192–203 (SSSNESLIFSGN) the composition is skewed to polar residues. Residue serine 230 is modified to Phosphoserine. Over residues 271–304 (SLPHSSLSSYPSSSRSLGSPASSSSSLHSLDRGS) the composition is skewed to low complexity. Polar residues-rich tracts occupy residues 326–344 (QAVQ…CPAS) and 372–397 (PGHQ…SPSK). Residues 429–536 (WFKPSITREQ…ALPCKLTIPQ (108 aa)) form the SH2 domain. Residues 563–690 (CHTLYLSSVS…QVISLVTALL (128 aa)) form the PTB domain.

This sequence belongs to the PTEN phosphatase protein family. Interacts (via SH2 domain) with Rho GTPase-activating protein DLC1 (via C-terminus); the interaction is independent of DLC1 tyrosine phosphorylation. Interacts with integrin ITGB1; the interaction displaces tensin TNS3 from the ITGB1 cytoplasmic tail and promotes ITGB1 stability. Interacts (via SH2 domain) with E3 ubiquitin-protein ligase CBL (phosphorylated on 'Tyr-780'); the interaction is enhanced in the presence of EGF and reduces interaction of CBL with EGFR. Interacts (via SH2 domain) with receptor tyrosine kinase MET (when phosphorylated); the interaction increases MET protein stability.

Its subcellular location is the cell junction. The protein localises to the focal adhesion. It localises to the cytoplasm. The protein resides in the cytoskeleton. In terms of biological role, promotes EGF-induced cell migration by displacing tensin TNS3 from the cytoplasmic tail of integrin ITGB1 which results in dissociation of TNS3 from focal adhesions, disassembly of actin stress fibers and initiation of cell migration. Suppresses ligand-induced degradation of EGFR by reducing EGFR ubiquitination in the presence of EGF. Increases MET protein stability by inhibiting MET endocytosis and subsequent lysosomal degradation which leads to increased cell survival, proliferation and migration. The polypeptide is Tensin-4 (Tns4) (Mus musculus (Mouse)).